The following is an 83-amino-acid chain: Mu-theraphotoxin-Hhn2b 3 (83 aa).

The signal sequence occupies residues 1 to 21; sequence MKASMFLALAGLVLLFVVCYA. Positions 22–48 are excised as a propeptide; it reads SESEEKEFPRELISKIFAVDDFKGEVR. Cystine bridges form between Cys-50–Cys-65, Cys-57–Cys-70, and Cys-64–Cys-77. Leu-81 is modified (leucine amide).

It belongs to the neurotoxin 10 (Hwtx-1) family. 14 (Hntx-1) subfamily. As to quaternary structure, monomer. As to expression, expressed by the venom gland.

It localises to the secreted. Functionally, weakly blocks the rat SCN2A/SCN1B (Nav1.2/beta-1) sodium channel (IC(50)=68 uM) and the insect sodium channel para/tipE (IC(50)=4.3 uM), without altering the activation or inactivation kinetics (depressant toxin). This chain is Mu-theraphotoxin-Hhn2b 3, found in Cyriopagopus hainanus (Chinese bird spider).